The primary structure comprises 210 residues: 2,3-bisphosphoglycerate-dependent phosphoglycerate mutase (210 aa).

Substrate contacts are provided by residues 9–16 (RHGQSEWN), 22–23 (TG), R61, 88–91 (ERDY), K99, 115–116 (RR), and 159–160 (GN). The active-site Tele-phosphohistidine intermediate is H10. The active-site Proton donor/acceptor is the E88.

Belongs to the phosphoglycerate mutase family. BPG-dependent PGAM subfamily. As to quaternary structure, homodimer.

It catalyses the reaction (2R)-2-phosphoglycerate = (2R)-3-phosphoglycerate. It functions in the pathway carbohydrate degradation; glycolysis; pyruvate from D-glyceraldehyde 3-phosphate: step 3/5. In terms of biological role, catalyzes the interconversion of 2-phosphoglycerate and 3-phosphoglycerate. The sequence is that of 2,3-bisphosphoglycerate-dependent phosphoglycerate mutase from Parvibaculum lavamentivorans (strain DS-1 / DSM 13023 / NCIMB 13966).